The chain runs to 176 residues: Variant surface antigen A (176 aa).

A signal peptide spans 1–29; sequence MKKSIFSKKLLVSFGSLVALAAIPLIAIS. Cys-30 is lipidated: N-palmitoyl cysteine. Cys-30 carries S-diacylglycerol cysteine lipidation. Positions 33 to 176 are disordered; the sequence is TDNNSSQSQQ…TKTENTQHTS (144 aa). Residues 35 to 121 are compositionally biased toward low complexity; the sequence is NNSSQSQQPG…GSNSESGMNS (87 aa). Copy 1 of the repeat occupies 123-135; sequence KTENTQQSEAPGT. The interval 123 to 176 is 2.5 X 13 AA repeats; that stretch reads KTENTQQSEAPGTNTGNKTTSESNSESGMNSEKTENTQQSEAPGTKTENTQHTS. Positions 126 to 142 are enriched in polar residues; the sequence is NTQQSEAPGTNTGNKTT. The segment covering 143–153 has biased composition (low complexity); the sequence is SESNSESGMNS. Copy 2 of the repeat occupies 155–167; it reads KTENTQQSEAPGT. Polar residues predominate over residues 158 to 176; that stretch reads NTQQSEAPGTKTENTQHTS. The stretch at 168-176 is one 3; truncated repeat; that stretch reads KTENTQHTS.

The protein resides in the cell membrane. In terms of biological role, responsible for the antigenic diversity for host adaptation. This is Variant surface antigen A (vlpA) from Mesomycoplasma hyorhinis (Mycoplasma hyorhinis).